The primary structure comprises 400 residues: uncharacterized protein (400 aa).

Positions 1-31 are cleaved as a signal peptide; it reads MENPIKPVATRSIGIAVVLLVVGIVIGFAVG.

This sequence belongs to the bacterial solute-binding protein 1 family. WtpA subfamily.

This is an uncharacterized protein from Thermoplasma acidophilum (strain ATCC 25905 / DSM 1728 / JCM 9062 / NBRC 15155 / AMRC-C165).